We begin with the raw amino-acid sequence, 379 residues long: ATP-sensitive inward rectifier potassium channel 10 (379 aa).

Over 1–61 the chain is Cytoplasmic; that stretch reads MTSVAKVYYS…LKDLWTTFID (61 aa). Arginine 36 contacts 1,2-dioctanoyl-sn-glycero-3-phospho-(1D-myo-inositol-4,5-bisphosphate). Residues 62–88 form a helical membrane-spanning segment; the sequence is MQWRYKLLLFSATFAGTWFLFGVVWYL. Residues 89–114 are Extracellular-facing; the sequence is VAVAHGDLLELGPPANHTPCVVQVHT. A disulfide bond links cysteine 108 and cysteine 140. The discontinuously helical; Pore-forming intramembrane region spans 115 to 131; the sequence is LTGAFLFSLESQTTIGY. Positions 128–133 match the Selectivity filter motif; it reads TIGYGF. Residues 132 to 140 are Extracellular-facing; that stretch reads GFRYISEEC. Residues 141–166 traverse the membrane as a helical segment; the sequence is PLAIVLLIAQLVLTTILEIFITGTFL. Residues 167-379 lie on the Cytoplasmic side of the membrane; sequence AKIARPKKRA…SALSVRISNV (213 aa). 1,2-dioctanoyl-sn-glycero-3-phospho-(1D-myo-inositol-4,5-bisphosphate) is bound by residues lysine 168, arginine 171, and lysine 173. 210–217 is a binding site for ATP; sequence GCQVTGKL.

This sequence belongs to the inward rectifier-type potassium channel (TC 1.A.2.1) family. KCNJ10 subfamily. In terms of assembly, homotetramer. In kidney cells, it forms heteromeric channels with Kir5.1/KCNJ16; this interaction is required for KCNJ16 localization to the basolateral membrane. Interacts with MAGI1, alone and possibly as a heteromer with KCNJ16; this interaction may facilitate KCNJ10/KCNJ16 potassium channel expression at the basolateral membrane in kidney cells. Interacts with PATJ. In terms of tissue distribution, widely expressed in adult brain, including in the neocortex, the stratum pyrimadale of the hippocampus and the piriform cortex. Expressed by cultured astrocytes and also by cocultured cortical neurons (at protein level). In the distal segment of the nephron, expressed in the distal convoluted tubule, the connecting tubule, and the early cortical collecting duct.

Its subcellular location is the membrane. The protein localises to the basolateral cell membrane. It carries out the reaction K(+)(in) = K(+)(out). Channel activity is strongly regulated by variations of cytosolic pH; channels are activated by alkaline and inhibited by acidic pH values. Activated by phosphatidylinositol 4,5 biphosphate (PtdIns(4,5)P2). Inhibited by Ba(2+) and Cs(+). Functionally, may be responsible for potassium buffering action of glial cells in the brain. Inward rectifier potassium channels are characterized by a greater tendency to allow potassium to flow into the cell rather than out of it. Their voltage dependence is regulated by the concentration of extracellular potassium; as external potassium is raised, the voltage range of the channel opening shifts to more positive voltages. The inward rectification is mainly due to the blockage of outward current by internal magnesium. Can be blocked by extracellular barium and cesium. In the kidney, together with KCNJ16, mediates basolateral K(+) recycling in distal tubules; this process is critical for Na(+) reabsorption at the tubules. This is ATP-sensitive inward rectifier potassium channel 10 from Mus musculus (Mouse).